Here is a 446-residue protein sequence, read N- to C-terminus: MSHYVGRLGRRSPAGSGRLRLHRKPRRVAMLSVHTSPLHQPGTGDAGGMNVYIVELAQRLAAQNVEVEIFTRATTGALPPTVELAPGVLVRHVDAGPYEGLAKEELPAQLCAFTHGVMQAWAGHRPGHYDLVHSHYWLSGHVGWLAAERWGVPLVHAMHTMAKVKNAALADDDTPEPAARVIGETQIVRAADRLIANTAEEAGELVRHYEADPDKVAVVHPGVNLDRFRPADGRAAARARLGLPQDALIPLFAGRIQPLKAPDVLLRAVAVLLDERPELRSRIVVPVVGGPSGSGLAKPEGLQKLAARLGIADVVRFRPPVGQEQLADWFRAASVLVMPSYSESFGLVAIEAQAAGTPVLAASVGGLPVAVRDGRTGFLVQGHDPAAYARVLGDFADTPDLPARMGAAAAAHAESFGWDTSAAATAEVYTAAMHDHRRYRVRGHYG.

The disordered stretch occupies residues 1–21; sequence MSHYVGRLGRRSPAGSGRLRL. H34 lines the 1D-myo-inositol 3-phosphate pocket. UDP-N-acetyl-alpha-D-glucosamine contacts are provided by residues 40–41 and G48; that span reads QP. 1D-myo-inositol 3-phosphate contacts are provided by residues 45-50, K103, Y136, T160, and R180; that span reads DAGGMN. Positions 255, 260, and 321 each coordinate UDP-N-acetyl-alpha-D-glucosamine. Mg(2+)-binding residues include F330, R331, and A333. Residues E343 and E351 each coordinate UDP-N-acetyl-alpha-D-glucosamine. Mg(2+) is bound at residue T357.

It belongs to the glycosyltransferase group 1 family. MshA subfamily. As to quaternary structure, homodimer.

The catalysed reaction is 1D-myo-inositol 3-phosphate + UDP-N-acetyl-alpha-D-glucosamine = 1D-myo-inositol 2-acetamido-2-deoxy-alpha-D-glucopyranoside 3-phosphate + UDP + H(+). Catalyzes the transfer of a N-acetyl-glucosamine moiety to 1D-myo-inositol 3-phosphate to produce 1D-myo-inositol 2-acetamido-2-deoxy-glucopyranoside 3-phosphate in the mycothiol biosynthesis pathway. This Streptomyces scabiei (strain 87.22) protein is D-inositol 3-phosphate glycosyltransferase.